The following is an 804-amino-acid chain: Chondroitin sulfate synthase mig-22 (804 aa).

Residues 1 to 6 lie on the Cytoplasmic side of the membrane; it reads MVGGGR. A helical; Signal-anchor for type II membrane protein transmembrane segment spans residues 7–27; the sequence is TGIHLLLGFLIGAALALFFFS. The Lumenal portion of the chain corresponds to 28-804; it reads STPSIDLTSS…QLAKLLFHEK (777 aa). N123, N172, and N268 each carry an N-linked (GlcNAc...) asparagine glycan.

Belongs to the chondroitin N-acetylgalactosaminyltransferase family. Interacts with sqv-5. Requires a divalent metal cation as cofactor. In terms of tissue distribution, expressed in seam cells, the vulval epithelium and in oocytes (at protein level).

Its subcellular location is the golgi apparatus. The protein resides in the golgi stack membrane. It catalyses the reaction 3-O-(beta-D-GlcA-(1-&gt;3)-beta-D-GalNAc-(1-&gt;4)-beta-D-GlcA-(1-&gt;3)-beta-D-Gal-(1-&gt;3)-beta-D-Gal-(1-&gt;4)-beta-D-Xyl)-L-seryl-[protein] + UDP-N-acetyl-alpha-D-galactosamine = 3-O-(beta-D-GalNAc-(1-&gt;4)-beta-D-GlcA-(1-&gt;3)-beta-D-GalNAc-(1-&gt;4)-beta-D-GlcA-(1-&gt;3)-beta-D-Gal-(1-&gt;3)-beta-D-Gal-(1-&gt;4)-beta-D-Xyl)-L-seryl-[protein] + UDP + H(+). The enzyme catalyses 3-O-{beta-D-GlcA-(1-&gt;3)-[beta-D-GalNAc-(1-&gt;4)-beta-D-GlcA-(1-&gt;3)](n)-beta-D-GalNAc-(1-&gt;4)-beta-D-GlcA-(1-&gt;3)-beta-D-Gal-(1-&gt;3)-beta-D-Gal-(1-&gt;4)-beta-D-Xyl}-L-seryl-[protein] + UDP-N-acetyl-alpha-D-galactosamine = 3-O-{[beta-D-GalNAc-(1-&gt;4)-beta-D-GlcA-(1-&gt;3)](n+1)-beta-D-GalNAc-(1-&gt;4)-beta-D-GlcA-(1-&gt;3)-beta-D-Gal-(1-&gt;3)-beta-D-Gal-(1-&gt;4)-beta-D-Xyl}-L-seryl-[protein] + UDP + H(+). It carries out the reaction 3-O-(beta-D-GalNAc-(1-&gt;4)-beta-D-GlcA-(1-&gt;3)-beta-D-Gal-(1-&gt;3)-beta-D-Gal-(1-&gt;4)-beta-D-Xyl)-L-seryl-[protein] + UDP-alpha-D-glucuronate = 3-O-(beta-D-GlcA-(1-&gt;3)-beta-D-GalNAc-(1-&gt;4)-beta-D-GlcA-(1-&gt;3)-beta-D-Gal-(1-&gt;3)-beta-D-Gal-(1-&gt;4)-beta-D-Xyl)-L-seryl-[protein] + UDP + H(+). The catalysed reaction is 3-O-{[beta-D-GalNAc-(1-&gt;4)-beta-D-GlcA-(1-&gt;3)](n)-beta-D-GalNAc-(1-&gt;4)-beta-D-GlcA-(1-&gt;3)-beta-D-Gal-(1-&gt;3)-beta-D-Gal-(1-&gt;4)-beta-D-Xyl}-L-seryl-[protein] + UDP-alpha-D-glucuronate = 3-O-{beta-D-GlcA-(1-&gt;3)-[beta-D-GalNAc-(1-&gt;4)-beta-D-GlcA-(1-&gt;3)](n)-beta-D-GalNAc-(1-&gt;4)-beta-D-GlcA-(1-&gt;3)-beta-D-Gal-(1-&gt;3)-beta-D-Gal-(1-&gt;4)-beta-D-Xyl}-L-seryl-[protein] + UDP + H(+). Functionally, has both beta-1,3-glucuronic acid and beta-1,4-N-acetylgalactosamine transferase activity. Transfers glucuronic acid (GlcUA) from UDP-GlcUA and N-acetylgalactosamine (GalNAc) from UDP-GalNAc to the non-reducing end of the elongating chondroitin polymer. Required together with sqv-5 for the biosynthesis of chondroitin. Chondroitin is involved in organogenesis of the vulva, maturation of the gonad, and neural development. May have a specific role in unc-6/netrin-mediated dorsal guidance of gonadal distal tip cells. Glycosyltransferase activity is weak. The sequence is that of Chondroitin sulfate synthase mig-22 (mig-22) from Caenorhabditis elegans.